A 460-amino-acid chain; its full sequence is Flavin-containing monooxygenase FMO GS-OX-like 9 (460 aa).

20 to 25 is an FAD binding site; sequence GAGPAG. 222–227 contributes to the NADP(+) binding site; it reads GNSMSG.

It belongs to the FMO family. The cofactor is FAD.

Its function is as follows. Catalyzes the conversion of methylthioalkyl glucosinolates of any chain length into methylsulfinylalkyl glucosinolates. In Arabidopsis thaliana (Mouse-ear cress), this protein is Flavin-containing monooxygenase FMO GS-OX-like 9.